The primary structure comprises 25 residues: Repetitive proline-rich cell wall protein (25 aa).

The interval 1 to 25 (NYDKPPVEKPPVYKPPVEKPPVYKP) is disordered. 4 tandem repeats follow at residues 5 to 9 (PPVEK), 10 to 14 (PPVYK), 15 to 19 (PPVEK), and 20 to 24 (PPVYK). The tract at residues 5-24 (PPVEKPPVYKPPVEKPPVYK) is 4 X 5 AA tandem repeats of P-P-V-[EY]-K. 4-hydroxyproline occurs at positions 6, 11, 16, and 21. Residues 8 to 25 (EKPPVYKPPVEKPPVYKP) show a composition bias toward pro residues.

It belongs to the plant proline-rich protein superfamily. ENOD12 family.

The protein resides in the secreted. Its subcellular location is the cell wall. The sequence is that of Repetitive proline-rich cell wall protein from Phaseolus vulgaris (Kidney bean).